The primary structure comprises 443 residues: 23S rRNA (uracil(1939)-C(5))-methyltransferase RlmD (443 aa).

In terms of domain architecture, TRAM spans 12–70 (SKQLSAKVSLQVTRLDHLGAGIAQHNGKVVFIPGVLPGEKAMVQLTEQKKRYSRAKLLN). 4 residues coordinate [4Fe-4S] cluster: Cys-83, Cys-89, Cys-92, and Cys-171. The S-adenosyl-L-methionine site is built by Gln-277, Phe-306, Asn-311, Glu-327, Asp-354, and Asp-374. Cys-400 serves as the catalytic Nucleophile.

The protein belongs to the class I-like SAM-binding methyltransferase superfamily. RNA M5U methyltransferase family. RlmD subfamily.

The catalysed reaction is uridine(1939) in 23S rRNA + S-adenosyl-L-methionine = 5-methyluridine(1939) in 23S rRNA + S-adenosyl-L-homocysteine + H(+). Functionally, catalyzes the formation of 5-methyl-uridine at position 1939 (m5U1939) in 23S rRNA. In Shewanella woodyi (strain ATCC 51908 / MS32), this protein is 23S rRNA (uracil(1939)-C(5))-methyltransferase RlmD.